A 469-amino-acid polypeptide reads, in one-letter code: Adenosylhomocysteinase (469 aa).

T63, D139, and E164 together coordinate substrate. T165–T167 is a binding site for NAD(+). Positions 194 and 198 each coordinate substrate. Residues N199, G228–G233, E251, N300, I321–H323, and N375 contribute to the NAD(+) site.

Belongs to the adenosylhomocysteinase family. NAD(+) serves as cofactor.

The protein localises to the cytoplasm. It carries out the reaction S-adenosyl-L-homocysteine + H2O = L-homocysteine + adenosine. Its pathway is amino-acid biosynthesis; L-homocysteine biosynthesis; L-homocysteine from S-adenosyl-L-homocysteine: step 1/1. May play a key role in the regulation of the intracellular concentration of adenosylhomocysteine. This is Adenosylhomocysteinase from Ectopseudomonas mendocina (strain ymp) (Pseudomonas mendocina).